The primary structure comprises 157 residues: Glutathione peroxidase (157 aa).

Cys35 is a catalytic residue.

The protein belongs to the glutathione peroxidase family.

It catalyses the reaction 2 glutathione + H2O2 = glutathione disulfide + 2 H2O. The sequence is that of Glutathione peroxidase (gpo) from Lactococcus lactis subsp. cremoris (strain MG1363).